A 689-amino-acid polypeptide reads, in one-letter code: uncharacterized protein (689 aa).

Ser566 lines the substrate pocket. Tyr579 acts as the Proton acceptor in catalysis.

The protein belongs to the short-chain dehydrogenases/reductases (SDR) family.

This is an uncharacterized protein from Bacillus subtilis (strain 168).